The following is a 142-amino-acid chain: Large ribosomal subunit protein uL13 (142 aa).

The protein belongs to the universal ribosomal protein uL13 family. As to quaternary structure, part of the 50S ribosomal subunit.

Its function is as follows. This protein is one of the early assembly proteins of the 50S ribosomal subunit, although it is not seen to bind rRNA by itself. It is important during the early stages of 50S assembly. The chain is Large ribosomal subunit protein uL13 from Shewanella putrefaciens (strain CN-32 / ATCC BAA-453).